The primary structure comprises 408 residues: UDP-N-acetylglucosamine--N-acetylmuramyl-(pentapeptide) pyrophosphoryl-undecaprenol N-acetylglucosamine transferase (408 aa).

A disordered region spans residues 1–20 (MNDTVKKPTGGRGDDPLPAG). Residues 41–43 (TAG), Asn160, Arg197, Ser231, and Gln327 contribute to the UDP-N-acetyl-alpha-D-glucosamine site.

This sequence belongs to the glycosyltransferase 28 family. MurG subfamily.

The protein resides in the cell membrane. The enzyme catalyses di-trans,octa-cis-undecaprenyl diphospho-N-acetyl-alpha-D-muramoyl-L-alanyl-D-glutamyl-meso-2,6-diaminopimeloyl-D-alanyl-D-alanine + UDP-N-acetyl-alpha-D-glucosamine = di-trans,octa-cis-undecaprenyl diphospho-[N-acetyl-alpha-D-glucosaminyl-(1-&gt;4)]-N-acetyl-alpha-D-muramoyl-L-alanyl-D-glutamyl-meso-2,6-diaminopimeloyl-D-alanyl-D-alanine + UDP + H(+). The protein operates within cell wall biogenesis; peptidoglycan biosynthesis. In terms of biological role, cell wall formation. Catalyzes the transfer of a GlcNAc subunit on undecaprenyl-pyrophosphoryl-MurNAc-pentapeptide (lipid intermediate I) to form undecaprenyl-pyrophosphoryl-MurNAc-(pentapeptide)GlcNAc (lipid intermediate II). This is UDP-N-acetylglucosamine--N-acetylmuramyl-(pentapeptide) pyrophosphoryl-undecaprenol N-acetylglucosamine transferase from Mycolicibacterium paratuberculosis (strain ATCC BAA-968 / K-10) (Mycobacterium paratuberculosis).